Consider the following 220-residue polypeptide: Ribonuclease HII (220 aa).

The 189-residue stretch at 32–220 folds into the RNase H type-2 domain; it reads KHIVGIDEAG…FAPIKGRYSV (189 aa). A divalent metal cation is bound by residues Asp38, Glu39, and Asp130.

It belongs to the RNase HII family. It depends on Mn(2+) as a cofactor. Mg(2+) serves as cofactor.

The protein resides in the cytoplasm. The catalysed reaction is Endonucleolytic cleavage to 5'-phosphomonoester.. In terms of biological role, endonuclease that specifically degrades the RNA of RNA-DNA hybrids. The polypeptide is Ribonuclease HII (Brucella anthropi (strain ATCC 49188 / DSM 6882 / CCUG 24695 / JCM 21032 / LMG 3331 / NBRC 15819 / NCTC 12168 / Alc 37) (Ochrobactrum anthropi)).